The chain runs to 507 residues: Maturase K (507 aa).

The protein belongs to the intron maturase 2 family. MatK subfamily.

It localises to the plastid. Its subcellular location is the chloroplast. Functionally, usually encoded in the trnK tRNA gene intron. Probably assists in splicing its own and other chloroplast group II introns. The sequence is that of Maturase K from Robinia pseudoacacia (Black locust).